Reading from the N-terminus, the 427-residue chain is uncharacterized protein (427 aa).

Residues 135–168 (PILKQKLVSLESKVKKIDKEMEKHNDLLKEIQEN) adopt a coiled-coil conformation.

This is an uncharacterized protein from Arabidopsis thaliana (Mouse-ear cress).